Here is a 164-residue protein sequence, read N- to C-terminus: MVNPTVFFDITADGEPLGRVCFELFADKVPKTAENFRALSTGEKGFGYKGSSFHRIIPGFMCQGGDFTRHNGTGGKSIYGEKFEDENFILKHTGPGILSMANAGPNTNGSQFFICTAKTEWLDGKHVVFGKVKEGMSIVEAMERFGSRNGKTSKKITISDCGQL.

Met1 carries the post-translational modification N-acetylmethionine. Val2 is subject to N-acetylvaline; in Peptidyl-prolyl cis-trans isomerase A, N-terminally processed. The 157-residue stretch at 7–163 (FFDITADGEP…KKITISDCGQ (157 aa)) folds into the PPIase cyclophilin-type domain. An N6-acetyllysine; alternate modification is found at Lys28. A Glycyl lysine isopeptide (Lys-Gly) (interchain with G-Cter in SUMO2); alternate cross-link involves residue Lys28. Residue Lys28 forms a Glycyl lysine isopeptide (Lys-Gly) (interchain with G-Cter in ubiquitin); alternate linkage. 2 positions are modified to N6-acetyllysine: Lys44 and Lys76. Phosphoserine is present on Ser77. Residue Lys82 is modified to N6-acetyllysine; alternate. A Glycyl lysine isopeptide (Lys-Gly) (interchain with G-Cter in SUMO2); alternate cross-link involves residue Lys82. Thr93 is subject to Phosphothreonine. Residue Asn108 is glycosylated (N-linked (GlcNAc...) asparagine). Residues Lys125, Lys131, and Lys133 each carry the N6-acetyllysine modification.

Belongs to the cyclophilin-type PPIase family. PPIase A subfamily. As to quaternary structure, interacts with protein phosphatase PPP3CA/calcineurin A. Interacts with isoform 2 of BSG/CD147. Interacts with FOXO1; the interaction promotes FOXO1 dephosphorylation, nuclear accumulation and transcriptional activity. Interacts with integrin ITGA2B:ITGB3; the interaction is ROS and peptidyl-prolyl cis-trans isomerase (PPIase) activity-dependent and is increased in the presence of thrombin. Interacts with MAP3K5. Interacts with TARDBP; the interaction is dependent on the RNA-binding activity of TARDBP and the PPIase activity of PPIA/CYPA and the acetylation of PPIA/CYPA at Lys-125 favors the interaction. Interacts with HNRNPA1, HNRNPA2B1, HNRNPC, RBMX, HNRNPK and HNRNPM. Acetylation at Lys-125 markedly inhibits catalysis of cis to trans isomerization. PPIA acetylation also antagonizes the immunosuppressive effects of cyclosporine by inhibiting the sequential steps of cyclosporine binding and calcineurin inhibition. Acetylation at Lys-125 favors the interaction with TARDBP.

The protein resides in the cytoplasm. It is found in the secreted. Its subcellular location is the nucleus. It carries out the reaction [protein]-peptidylproline (omega=180) = [protein]-peptidylproline (omega=0). Binds cyclosporin A (CsA). CsA mediates some of its effects via an inhibitory action on PPIase. In terms of biological role, catalyzes the cis-trans isomerization of proline imidic peptide bonds in oligopeptides. Exerts a strong chemotactic effect on leukocytes partly through activation of one of its membrane receptors BSG/CD147, initiating a signaling cascade that culminates in MAPK/ERK activation. Activates endothelial cells (ECs) in a proinflammatory manner by stimulating activation of NF-kappa-B and ERK, JNK and p38 MAP-kinases and by inducing expression of adhesion molecules including SELE and VCAM1. Induces apoptosis in ECs by promoting the FOXO1-dependent expression of CCL2 and BCL2L11 which are involved in EC chemotaxis and apoptosis. In response to oxidative stress, initiates proapoptotic and antiapoptotic signaling in ECs via activation of NF-kappa-B and AKT1 and up-regulation of antiapoptotic protein BCL2. Negatively regulates MAP3K5/ASK1 kinase activity, autophosphorylation and oxidative stress-induced apoptosis mediated by MAP3K5/ASK1. Necessary for the assembly of TARDBP in heterogeneous nuclear ribonucleoprotein (hnRNP) complexes and regulates TARDBP binding to RNA UG repeats and TARDBP-dependent expression of HDAC6, ATG7 and VCP which are involved in clearance of protein aggregates. Plays an important role in platelet activation and aggregation. Regulates calcium mobilization and integrin ITGA2B:ITGB3 bidirectional signaling via increased ROS production as well as by facilitating the interaction between integrin and the cell cytoskeleton. Binds heparan sulfate glycosaminoglycans. The protein is Peptidyl-prolyl cis-trans isomerase A (Ppia) of Rattus norvegicus (Rat).